The sequence spans 1122 residues: Telomerase reverse transcriptase (1122 aa).

The segment at 1-239 (MTRAPRCPAV…TKRHLSLTST (239 aa)) is RNA-interacting domain 1. The segment at 58–205 (MHWGSQPPPA…RPVGRNFTNL (148 aa)) is GQ motif. A required for regulating specificity for telomeric DNA and for processivity for primer elongation region spans residues 137–141 (WMLLL). The disordered stretch occupies residues 213 to 296 (SSSRQEAPKP…KDLSSKGKVS (84 aa)). Positions 240-328 (SVPSAKKARC…PRQNAFQLRP (89 aa)) are linker. Basic and acidic residues predominate over residues 284–295 (TAEKDLSSKGKV). Residues 306-528 (CKHKPSSTSL…VPAAEHRLRE (223 aa)) are required for oligomerization. The tract at residues 329 to 540 (FIETRHFLYS…LATFLFWLMD (212 aa)) is RNA-interacting domain 2. The short motif at 332-337 (TRHFLY) is the TFLY; involved in RNA binding element. Positions 381–511 (LCRTHRLSRR…MKVEDCHWLR (131 aa)) are QFP motif. The CP motif stretch occupies residues 402 to 422 (LVNHAECQYVRLLRSHCRFRT). Position 447 is a phosphoserine; by DYRK2 (Ser-447). The Reverse transcriptase domain occupies 595-928 (EVRHHQDTWL…CLFPWCGLLL (334 aa)). Tyr-697 bears the Phosphotyrosine; by SRC-type Tyr-kinases mark. Residues Asp-702, Asp-861, and Asp-862 each coordinate Mg(2+). The required for oligomerization stretch occupies residues 907-921 (LGGAAPYQLPAHCLF). The interval 923–927 (WCGLL) is primer grip sequence. Residues 929-1122 (DTQTLEVFCD…LSTDFQTILD (194 aa)) form a CTE region.

The protein belongs to the reverse transcriptase family. Telomerase subfamily. Catalytic component of the telomerase holoenzyme complex composed of one molecule of TERT, one molecule of WRAP53/TCAB1, two molecules of H/ACA ribonucleoprotein complex subunits DKC1, NOP10, NHP2 and GAR1, and a telomerase RNA template component (TERC). The telomerase holoenzyme complex is associated with TEP1, SMG6/EST1A and POT1. The molecular chaperone HSP90/P23 complex is required for correct assembly and stabilization of the active telomerase. Interacts directly with HSP90A and PTGES3. Interacts with HSPA1A; the interaction occurs in the absence of TERC and dissociates once the complex has formed. Interacts with RAN; the interaction promotes nuclear export of TERT. Interacts with XPO1. Interacts with PTPN11; the interaction retains TERT in the nucleus. Interacts with NCL (via RRM1 and C-terminal RRM4/Arg/Gly-rich domains); the interaction is important for nucleolar localization of TERT. Interacts with SMARCA4 (via the bromodomain); the interaction regulates Wnt-mediated signaling. Interacts with MCRS1 (isoform MCRS2); the interaction inhibits in vitro telomerase activity. Interacts with PIF1; the interaction has no effect on the elongation activity of TERT. Interacts with PML; the interaction recruits TERT to PML bodies and inhibits telomerase activity. Interacts with GNL3L. Interacts with isoform 1 and isoform 2 of NVL. Interacts with DHX36. Interacts with ATF7. Phosphorylation at Tyr-697 under oxidative stress leads to translocation of TERT to the cytoplasm and reduces its antiapoptotic activity. Dephosphorylated by SHP2/PTPN11 leading to nuclear retention. Phosphorylation by the AKT pathway promotes nuclear location. Phosphorylation at the G2/M phase at Ser-447 by DYRK2 promotes ubiquitination by the EDVP complex and degradation. Post-translationally, ubiquitinated by the EDVP complex, a E3 ligase complex following phosphorylation at Ser-447 by DYRK2. Ubiquitinated leads to proteasomal degradation. High activity in intestine, liver and testis, moderate in lung, very low in muscle, heart and brain.

Its subcellular location is the nucleus. It is found in the nucleolus. The protein localises to the nucleoplasm. The protein resides in the chromosome. It localises to the telomere. Its subcellular location is the cytoplasm. It is found in the PML body. The catalysed reaction is DNA(n) + a 2'-deoxyribonucleoside 5'-triphosphate = DNA(n+1) + diphosphate. Its function is as follows. Telomerase is a ribonucleoprotein enzyme essential for the replication of chromosome termini in most eukaryotes. Active in progenitor and cancer cells. Inactive, or very low activity, in normal somatic cells. Catalytic component of the teleromerase holoenzyme complex whose main activity is the elongation of telomeres by acting as a reverse transcriptase that adds simple sequence repeats to chromosome ends by copying a template sequence within the RNA component of the enzyme. Catalyzes the RNA-dependent extension of 3'-chromosomal termini with the 6-nucleotide telomeric repeat unit, 5'-TTAGGG-3'. The catalytic cycle involves primer binding, primer extension and release of product once the template boundary has been reached or nascent product translocation followed by further extension. More active on substrates containing 2 or 3 telomeric repeats. Telomerase activity is regulated by a number of factors including telomerase complex-associated proteins, chaperones and polypeptide modifiers. Modulates Wnt signaling. Plays important roles in aging and antiapoptosis. The chain is Telomerase reverse transcriptase (Tert) from Mus musculus (Mouse).